Here is a 1151-residue protein sequence, read N- to C-terminus: ATP-dependent helicase/deoxyribonuclease subunit B (1151 aa).

The UvrD-like helicase ATP-binding domain maps to 1–273 (MALRLVLGRA…LALAAGVRVE (273 aa)). 8 to 15 (GRAGSGKT) provides a ligand contact to ATP. The region spanning 282–578 (PPRFREAPAL…KLRLIPPALD (297 aa)) is the UvrD-like helicase C-terminal domain. Residues cysteine 788, cysteine 1107, cysteine 1110, and cysteine 1116 each coordinate [4Fe-4S] cluster.

Belongs to the helicase family. AddB/RexB type 1 subfamily. As to quaternary structure, heterodimer of AddA and AddB. Mg(2+) serves as cofactor. It depends on [4Fe-4S] cluster as a cofactor.

Its function is as follows. The heterodimer acts as both an ATP-dependent DNA helicase and an ATP-dependent, dual-direction single-stranded exonuclease. Recognizes the chi site generating a DNA molecule suitable for the initiation of homologous recombination. The AddB subunit has 5' -&gt; 3' nuclease activity but not helicase activity. The polypeptide is ATP-dependent helicase/deoxyribonuclease subunit B (Moorella thermoacetica (strain ATCC 39073 / JCM 9320)).